Consider the following 498-residue polypeptide: Probable malate:quinone oxidoreductase 2 (498 aa).

The protein belongs to the MQO family. The cofactor is FAD.

It catalyses the reaction (S)-malate + a quinone = a quinol + oxaloacetate. The protein operates within carbohydrate metabolism; tricarboxylic acid cycle; oxaloacetate from (S)-malate (quinone route): step 1/1. The chain is Probable malate:quinone oxidoreductase 2 from Staphylococcus epidermidis (strain ATCC 12228 / FDA PCI 1200).